The primary structure comprises 276 residues: MPEMPEVETVRRTLTPLVKGKTIAKINIWYPKIIVNDPAEFVKKLTNKRILKIDRYGKYLLFRFNDDLTMVSHLRMEGKYHLVSPDTPKGKHEHVEFIFTDGTALRYDDVRKFGRMHLVETGTERKTTGIRHLGPEPNTAEFNLKYFVDALSQKKKNIKNTLLDQTIVCGLGNIYVDEVLWKSKIHPLSSAKAIPADKVKNLYQNINHTIAIATKERGTTVHTYLDANGEIGGYQKMLQVYGHAGEECSSCGTILEKIKVNGRGTTFCPHCQVLYK.

Pro2 serves as the catalytic Schiff-base intermediate with DNA. Glu3 acts as the Proton donor in catalysis. Lys58 (proton donor; for beta-elimination activity) is an active-site residue. 3 residues coordinate DNA: His92, Arg111, and Lys154. The segment at 239-273 adopts an FPG-type zinc-finger fold; it reads QVYGHAGEECSSCGTILEKIKVNGRGTTFCPHCQV. Arg263 (proton donor; for delta-elimination activity) is an active-site residue.

Belongs to the FPG family. As to quaternary structure, monomer. It depends on Zn(2+) as a cofactor.

It carries out the reaction Hydrolysis of DNA containing ring-opened 7-methylguanine residues, releasing 2,6-diamino-4-hydroxy-5-(N-methyl)formamidopyrimidine.. It catalyses the reaction 2'-deoxyribonucleotide-(2'-deoxyribose 5'-phosphate)-2'-deoxyribonucleotide-DNA = a 3'-end 2'-deoxyribonucleotide-(2,3-dehydro-2,3-deoxyribose 5'-phosphate)-DNA + a 5'-end 5'-phospho-2'-deoxyribonucleoside-DNA + H(+). Involved in base excision repair of DNA damaged by oxidation or by mutagenic agents. Acts as a DNA glycosylase that recognizes and removes damaged bases. Has a preference for oxidized purines, such as 7,8-dihydro-8-oxoguanine (8-oxoG). Has AP (apurinic/apyrimidinic) lyase activity and introduces nicks in the DNA strand. Cleaves the DNA backbone by beta-delta elimination to generate a single-strand break at the site of the removed base with both 3'- and 5'-phosphates. The polypeptide is Formamidopyrimidine-DNA glycosylase (Lactobacillus gasseri (strain ATCC 33323 / DSM 20243 / BCRC 14619 / CIP 102991 / JCM 1131 / KCTC 3163 / NCIMB 11718 / NCTC 13722 / AM63)).